The sequence spans 185 residues: NADH-dependent FMN reductase AsuE2 (185 aa).

Low complexity predominate over residues 1-13 (MSTHTARRAGATA). Positions 1 to 24 (MSTHTARRAGATAGHDRDRGTEPG) are disordered. Over residues 14-24 (GHDRDRGTEPG) the composition is skewed to basic and acidic residues.

This sequence belongs to the non-flavoprotein flavin reductase family. Does not interact with AsuE1, suggesting a possible transient interaction between the two enzymes instead of formation of a stable complex.

It carries out the reaction FMNH2 + NAD(+) = FMN + NADH + 2 H(+). It participates in antibiotic biosynthesis. Its function is as follows. Involved in the biosynthesis of the antibiotic asukamycin. When flavin concentration is low, AsuE2 assists the protoasukamycin 4-monooxygenase AsuE1 by providing a reduced form of flavin, enhancing AsuE1 activity. In Streptomyces nodosus subsp. asukaensis, this protein is NADH-dependent FMN reductase AsuE2.